Consider the following 292-residue polypeptide: 4-hydroxy-tetrahydrodipicolinate synthase 2 (292 aa).

Pyruvate is bound at residue Thr46. The active-site Proton donor/acceptor is Tyr134. Lys162 serves as the catalytic Schiff-base intermediate with substrate. Val204 is a binding site for pyruvate.

Belongs to the DapA family. In terms of assembly, homotetramer; dimer of dimers.

Its subcellular location is the cytoplasm. The catalysed reaction is L-aspartate 4-semialdehyde + pyruvate = (2S,4S)-4-hydroxy-2,3,4,5-tetrahydrodipicolinate + H2O + H(+). It functions in the pathway amino-acid biosynthesis; L-lysine biosynthesis via DAP pathway; (S)-tetrahydrodipicolinate from L-aspartate: step 3/4. In terms of biological role, catalyzes the condensation of (S)-aspartate-beta-semialdehyde [(S)-ASA] and pyruvate to 4-hydroxy-tetrahydrodipicolinate (HTPA). This chain is 4-hydroxy-tetrahydrodipicolinate synthase 2, found in Halalkalibacterium halodurans (strain ATCC BAA-125 / DSM 18197 / FERM 7344 / JCM 9153 / C-125) (Bacillus halodurans).